The sequence spans 270 residues: 4-hydroxy-tetrahydrodipicolinate reductase (270 aa).

Residues 9–14 (GAGGRM) and glutamate 35 each bind NAD(+). Arginine 36 contributes to the NADP(+) binding site. NAD(+) is bound by residues 99–101 (GTT) and 123–126 (ASNF). The Proton donor/acceptor role is filled by histidine 156. Residue histidine 157 coordinates (S)-2,3,4,5-tetrahydrodipicolinate. Lysine 160 (proton donor) is an active-site residue. 166–167 (GT) is a (S)-2,3,4,5-tetrahydrodipicolinate binding site.

This sequence belongs to the DapB family.

The protein resides in the cytoplasm. It catalyses the reaction (S)-2,3,4,5-tetrahydrodipicolinate + NAD(+) + H2O = (2S,4S)-4-hydroxy-2,3,4,5-tetrahydrodipicolinate + NADH + H(+). It carries out the reaction (S)-2,3,4,5-tetrahydrodipicolinate + NADP(+) + H2O = (2S,4S)-4-hydroxy-2,3,4,5-tetrahydrodipicolinate + NADPH + H(+). It participates in amino-acid biosynthesis; L-lysine biosynthesis via DAP pathway; (S)-tetrahydrodipicolinate from L-aspartate: step 4/4. Catalyzes the conversion of 4-hydroxy-tetrahydrodipicolinate (HTPA) to tetrahydrodipicolinate. This is 4-hydroxy-tetrahydrodipicolinate reductase from Haemophilus influenzae (strain ATCC 51907 / DSM 11121 / KW20 / Rd).